The chain runs to 137 residues: Nucleoside diphosphate kinase (137 aa).

Residues lysine 9, phenylalanine 57, arginine 85, threonine 91, arginine 102, and asparagine 112 each coordinate ATP. The active-site Pros-phosphohistidine intermediate is histidine 115.

It belongs to the NDK family. As to quaternary structure, homotetramer. The cofactor is Mg(2+).

It localises to the cytoplasm. It catalyses the reaction a 2'-deoxyribonucleoside 5'-diphosphate + ATP = a 2'-deoxyribonucleoside 5'-triphosphate + ADP. It carries out the reaction a ribonucleoside 5'-diphosphate + ATP = a ribonucleoside 5'-triphosphate + ADP. Its function is as follows. Major role in the synthesis of nucleoside triphosphates other than ATP. The ATP gamma phosphate is transferred to the NDP beta phosphate via a ping-pong mechanism, using a phosphorylated active-site intermediate. The chain is Nucleoside diphosphate kinase from Geobacter sulfurreducens (strain ATCC 51573 / DSM 12127 / PCA).